Reading from the N-terminus, the 243-residue chain is UPF0502 protein H16_B1091 (243 aa).

The segment at 1 to 23 (MQSNHDSDASQAGDRPARPALRP) is disordered.

Belongs to the UPF0502 family.

This chain is UPF0502 protein H16_B1091, found in Cupriavidus necator (strain ATCC 17699 / DSM 428 / KCTC 22496 / NCIMB 10442 / H16 / Stanier 337) (Ralstonia eutropha).